The sequence spans 354 residues: Malate dehydrogenase 2, peroxisomal (354 aa).

A peroxisomal targeting signal PTS2 region spans residues 10-18 (RIARISAHL). Residues 49–55 (GAAGGIG) and Asp-75 contribute to the NAD(+) site. Residues Arg-122 and Arg-128 each contribute to the substrate site. NAD(+) contacts are provided by residues Asn-135 and 158-160 (ISN). Substrate contacts are provided by Asn-160 and Arg-194. His-218 functions as the Proton acceptor in the catalytic mechanism. An NAD(+)-binding site is contributed by Met-269.

It belongs to the LDH/MDH superfamily. MDH type 1 family. As to quaternary structure, homodimer. As to expression, expressed in rosette leaves.

The protein resides in the peroxisome. The enzyme catalyses (S)-malate + NAD(+) = oxaloacetate + NADH + H(+). Functionally, catalyzes a reversible NAD-dependent dehydrogenase reaction involved in central metabolism and redox homeostasis between organelle compartments. Peroxisomal NAD-dependent malate dehydrogenase involved in fatty acid beta-oxidation. Reoxidizes NADH from the beta-oxidation and provides NAD for the conversion of fatty acyl-CoA to acetyl-CoA. Does not participate directly in the glyoxylate cycle. Required for maintenance of photosynthetic rates under photorespiratory conditions, and carbon flow during photorespiration. Supplies NADH reductant to the peroxisomal hydroxypyruvate reductase (HPR), which reduces hydroxypyruvate into glycerate in the photorespiratory cycle. This is Malate dehydrogenase 2, peroxisomal from Arabidopsis thaliana (Mouse-ear cress).